A 338-amino-acid chain; its full sequence is MEMO1 family protein MHO1 (338 aa).

This sequence belongs to the MEMO1 family.

It is found in the cytoplasm. The protein localises to the nucleus. Plays a role in haploid invasive growth under conditions of nutrient insufficiency, suggesting that the function of the MEMO1 family in cell motility/invasion is conserved across species. This is MEMO1 family protein MHO1 from Saccharomyces cerevisiae (strain ATCC 204508 / S288c) (Baker's yeast).